Consider the following 169-residue polypeptide: S-ribosylhomocysteine lyase (169 aa).

Fe cation-binding residues include H54, H58, and C128.

It belongs to the LuxS family. As to quaternary structure, homodimer. Requires Fe cation as cofactor.

The catalysed reaction is S-(5-deoxy-D-ribos-5-yl)-L-homocysteine = (S)-4,5-dihydroxypentane-2,3-dione + L-homocysteine. Involved in the synthesis of autoinducer 2 (AI-2) which is secreted by bacteria and is used to communicate both the cell density and the metabolic potential of the environment. The regulation of gene expression in response to changes in cell density is called quorum sensing. Catalyzes the transformation of S-ribosylhomocysteine (RHC) to homocysteine (HC) and 4,5-dihydroxy-2,3-pentadione (DPD). The chain is S-ribosylhomocysteine lyase from Shewanella baltica (strain OS223).